We begin with the raw amino-acid sequence, 52 residues long: Insulin (52 aa).

3 disulfides stabilise this stretch: cysteine 7–cysteine 38, cysteine 19–cysteine 51, and cysteine 37–cysteine 42.

The protein belongs to the insulin family. In terms of assembly, heterodimer of a B chain and an A chain linked by two disulfide bonds.

It is found in the secreted. Functionally, insulin decreases blood glucose concentration. It increases cell permeability to monosaccharides, amino acids and fatty acids. It accelerates glycolysis, the pentose phosphate cycle, and glycogen synthesis in liver. The sequence is that of Insulin (ins) from Polypterus senegalus (Senegal bichir).